A 512-amino-acid polypeptide reads, in one-letter code: 2-isopropylmalate synthase (512 aa).

In terms of domain architecture, Pyruvate carboxyltransferase spans 5 to 268 (LIIFDTTLRD…ELGIDTQHIV (264 aa)). The Mn(2+) site is built by Asp-14, His-202, His-204, and Asn-239. Positions 394–512 (GFVSLSQRSE…SKAERVAAQG (119 aa)) are regulatory domain.

The protein belongs to the alpha-IPM synthase/homocitrate synthase family. LeuA type 1 subfamily. In terms of assembly, homodimer. Mn(2+) is required as a cofactor.

The protein localises to the cytoplasm. The enzyme catalyses 3-methyl-2-oxobutanoate + acetyl-CoA + H2O = (2S)-2-isopropylmalate + CoA + H(+). It participates in amino-acid biosynthesis; L-leucine biosynthesis; L-leucine from 3-methyl-2-oxobutanoate: step 1/4. In terms of biological role, catalyzes the condensation of the acetyl group of acetyl-CoA with 3-methyl-2-oxobutanoate (2-ketoisovalerate) to form 3-carboxy-3-hydroxy-4-methylpentanoate (2-isopropylmalate). The polypeptide is 2-isopropylmalate synthase (Paracidovorax citrulli (strain AAC00-1) (Acidovorax citrulli)).